A 585-amino-acid chain; its full sequence is ATP-dependent lipid A-core flippase (585 aa).

The next 6 membrane-spanning stretches (helical) occupy residues 23-43, 64-84, 140-160, 163-183, 247-267, and 273-293; these read LAFGVAIIGMVGYSLIDAYVI, IAAYFVIPVFIARGIFNFMGT, AFLTLVREGALVFGLLFWMFY, WQLSLVFILIGPLVAMIVSVV, ILSVSSIQVIASVALAVVLYI, and FITDLTPGTFVTVVVAMTMLL. The ABC transmembrane type-1 domain maps to 27-308; the sequence is VAIIGMVGYS…LTTVNSEFQK (282 aa). The ABC transporter domain maps to 340 to 576; it reads LEFRDVTFHY…DGAYAQLHKL (237 aa). 374–381 is a binding site for ATP; the sequence is GRSGSGKS.

The protein belongs to the ABC transporter superfamily. Lipid exporter (TC 3.A.1.106) family. Homodimer.

It localises to the cell inner membrane. It catalyses the reaction ATP + H2O + lipid A-core oligosaccharideSide 1 = ADP + phosphate + lipid A-core oligosaccharideSide 2.. In terms of biological role, involved in lipopolysaccharide (LPS) biosynthesis. Translocates lipid A-core from the inner to the outer leaflet of the inner membrane. Transmembrane domains (TMD) form a pore in the inner membrane and the ATP-binding domain (NBD) is responsible for energy generation. The sequence is that of ATP-dependent lipid A-core flippase from Pseudoalteromonas atlantica (strain T6c / ATCC BAA-1087).